The primary structure comprises 325 residues: Putative aryl-alcohol dehydrogenase C750.01 (325 aa).

It belongs to the aldo/keto reductase family. Aldo/keto reductase 2 subfamily.

The protein is Putative aryl-alcohol dehydrogenase C750.01 of Schizosaccharomyces pombe (strain 972 / ATCC 24843) (Fission yeast).